A 521-amino-acid polypeptide reads, in one-letter code: Acidic amino acid decarboxylase GADL1 (521 aa).

Residue K333 is modified to N6-(pyridoxal phosphate)lysine.

The protein belongs to the group II decarboxylase family. As to quaternary structure, homodimer. Pyridoxal 5'-phosphate serves as cofactor. As to expression, expressed very weakly in neurons and not detected in astrocytes, brain or liver.

It carries out the reaction L-aspartate + H(+) = beta-alanine + CO2. It catalyses the reaction 3-sulfino-L-alanine + H(+) = hypotaurine + CO2. The enzyme catalyses L-cysteate + H(+) = taurine + CO2. In terms of biological role, may catalyze the decarboxylation of L-aspartate, 3-sulfino-L-alanine (cysteine sulfinic acid), and L-cysteate to beta-alanine, hypotaurine and taurine, respectively. Does not exhibit any decarboxylation activity toward glutamate. The sequence is that of Acidic amino acid decarboxylase GADL1 (GADL1) from Homo sapiens (Human).